We begin with the raw amino-acid sequence, 290 residues long: 30 kDa spicule matrix protein alpha (290 aa).

Residues 1 to 20 (MRGFVYVLVCVLALASFSRA) form the signal peptide. One can recognise a C-type lectin domain in the interval 92–162 (ANMYCGQMHP…YTNWERMTAP (71 aa)). An N-linked (GlcNAc...) asparagine glycan is attached at Asn-102.

In terms of tissue distribution, accumulates exclusively in mineralized tissues.

In terms of biological role, matrix protein of the sea urchin embryo spicule. The function of the matrix proteins is to direct crystal growth in certain orientations and inhibit growth in others. This is 30 kDa spicule matrix protein alpha (SM30A) from Strongylocentrotus purpuratus (Purple sea urchin).